The chain runs to 406 residues: uncharacterized protein (406 aa).

The protein belongs to the glycosyltransferase group 1 family. Glycosyltransferase 4 subfamily.

This is an uncharacterized protein from Methanocaldococcus jannaschii (strain ATCC 43067 / DSM 2661 / JAL-1 / JCM 10045 / NBRC 100440) (Methanococcus jannaschii).